We begin with the raw amino-acid sequence, 245 residues long: Eukaryotic translation initiation factor 6 (245 aa).

Belongs to the eIF-6 family. Monomer. Associates with the 60S ribosomal subunit.

Its subcellular location is the cytoplasm. It is found in the nucleus. It localises to the nucleolus. Binds to the 60S ribosomal subunit and prevents its association with the 40S ribosomal subunit to form the 80S initiation complex in the cytoplasm. May also be involved in ribosome biogenesis. The sequence is that of Eukaryotic translation initiation factor 6 from Ostreococcus lucimarinus (strain CCE9901).